The following is a 412-amino-acid chain: AT-rich interactive domain-containing protein 3C (412 aa).

Low complexity predominate over residues 1–23 (MEALQKQQAARLAQGVGPLAPAC). A disordered region spans residues 1-96 (MEALQKQQAA…SSQPPGLHPH (96 aa)). The span at 50-73 (AEEEEDAEEDEEKREEAGAEEEAA) shows a compositional bias: acidic residues. Positions 78 to 87 (PGAQGPSSPS) are enriched in low complexity. The 93-residue stretch at 113–205 (DPKRKEFLDD…YLYPYECETR (93 aa)) folds into the ARID domain. 2 disordered regions span residues 232 to 278 (TPLF…AHAC) and 388 to 412 (PVPA…SILP). Residues 259–272 (TQSSPGPAQGSTSG) are compositionally biased toward polar residues. In terms of domain architecture, REKLES spans 304 to 389 (LALGPTREKL…GVLFARRQPV (86 aa)).

As to quaternary structure, interacts (via REKLES DOMAIN) with NPM1; the interaction mediates ARID3C nuclear shuttling.

The protein localises to the nucleus. In terms of biological role, transcription factor involved in monocyte-to-macrophage differentiation. Forms a complex with NPM1 to translocate to the nucleus, acting as a transcription factor that promotes the expression of the genes involved in macrophage differentiation, such as STAT3, STAT1 and JUNB. This chain is AT-rich interactive domain-containing protein 3C, found in Homo sapiens (Human).